A 598-amino-acid polypeptide reads, in one-letter code: Beta-hexosaminidase A (598 aa).

An N-terminal signal peptide occupies residues 1-11 (MSFITSAHATA). D305 is a catalytic residue.

It belongs to the glycosyl hydrolase 3 family.

It catalyses the reaction Hydrolysis of terminal non-reducing N-acetyl-D-hexosamine residues in N-acetyl-beta-D-hexosaminides.. Functionally, most active towards p-nitrophenyl-N-acetyl-beta-D-glucosaminide(PNP-beta-GlcNAc) and diacetylchitobiose. The sequence is that of Beta-hexosaminidase A (cht60) from Pseudoalteromonas piscicida.